Reading from the N-terminus, the 381-residue chain is Odorant receptor 46a, isoform A (381 aa).

The Cytoplasmic portion of the chain corresponds to 1 to 37; the sequence is MSKGVEIFYKGQKAFLNILSLWPQIERRWRIIHQVNY. The chain crosses the membrane as a helical span at residues 38–58; sequence VHVIVFWVLLFDLLLVLHVMA. Residue asparagine 59 is glycosylated (N-linked (GlcNAc...) asparagine). Over 59 to 65 the chain is Extracellular; that stretch reads NLSYMSE. Residues 66–86 form a helical membrane-spanning segment; sequence VVKAIFILATSAGHTTKLLSI. At 87-127 the chain is on the cytoplasmic side; sequence KANNVQMEELFRRLDNEEFRPRGANEELIFAAACERSRKLR. A helical membrane pass occupies residues 128–148; that stretch reads DFYGALSFAALSMILIPQFAL. At 149–170 the chain is on the extracellular side; sequence DWSHLPLKTYNPLGENTGSPAY. A helical membrane pass occupies residues 171–191; that stretch reads WLLYCYQCLALSVSCITNIGF. Over 192–255 the chain is Cytoplasmic; it reads DSLCSSLFIF…KTVERLLCKP (64 aa). Residues 256–276 traverse the membrane as a helical segment; that stretch reads ISVQIFCSVLVLTANFYAIAV. The Extracellular portion of the chain corresponds to 277–287; that stretch reads LSDERLELFKY. Residues 288–308 traverse the membrane as a helical segment; it reads VTYQACMLIQIFILCYYAGEV. Over 309 to 355 the chain is Cytoplasmic; sequence TQRSLDLPHELYKTSWVDWDYRSRRIALLFMQRLHSTLRIRTLNPSL. A helical membrane pass occupies residues 356-376; sequence GFDLMLFSSIVNCSYSYFALL. Over 377-381 the chain is Extracellular; the sequence is KRVNS.

It belongs to the insect chemoreceptor superfamily. Heteromeric odorant receptor channel (TC 1.A.69) family. Or2a subfamily. Interacts with Orco. Complexes exist early in the endomembrane system in olfactory sensory neurons (OSNs), coupling these complexes to the conserved ciliary trafficking pathway. In terms of tissue distribution, isoform A is expressed in a subset of 17 olfactory receptor neurons in the maxillary palp.

It localises to the cell membrane. In terms of biological role, odorant receptor which mediates acceptance or avoidance behavior, depending on its substrates. The odorant receptor repertoire encodes a large collection of odor stimuli that vary widely in identity, intensity, and duration. May form a complex with Orco to form odorant-sensing units, providing sensitive and prolonged odorant signaling and calcium permeability. In Drosophila melanogaster (Fruit fly), this protein is Odorant receptor 46a, isoform A (Or46a).